The primary structure comprises 492 residues: Cysteine--tRNA ligase (492 aa).

Cysteine 29 lines the Zn(2+) pocket. The 'HIGH' region signature appears at 31 to 41 (LTTSDPPHLGH). Cysteine 229, histidine 254, and glutamate 258 together coordinate Zn(2+). The 'KMSKS' region signature appears at 286–290 (KMSSS).

Belongs to the class-I aminoacyl-tRNA synthetase family. It depends on Zn(2+) as a cofactor.

It localises to the cytoplasm. The enzyme catalyses tRNA(Cys) + L-cysteine + ATP = L-cysteinyl-tRNA(Cys) + AMP + diphosphate. The chain is Cysteine--tRNA ligase from Haloarcula marismortui (strain ATCC 43049 / DSM 3752 / JCM 8966 / VKM B-1809) (Halobacterium marismortui).